The following is a 232-amino-acid chain: Large ribosomal subunit protein uL1 (232 aa).

Belongs to the universal ribosomal protein uL1 family. Part of the 50S ribosomal subunit.

In terms of biological role, binds directly to 23S rRNA. The L1 stalk is quite mobile in the ribosome, and is involved in E site tRNA release. Functionally, protein L1 is also a translational repressor protein, it controls the translation of the L11 operon by binding to its mRNA. The polypeptide is Large ribosomal subunit protein uL1 (Rhizobium rhizogenes (strain K84 / ATCC BAA-868) (Agrobacterium radiobacter)).